The primary structure comprises 134 residues: Small ribosomal subunit protein bS6 (134 aa).

Residues 100 to 134 (SFLARDETDRRERSEETAEGEGEPDHSANEAVVTA) are disordered. Basic and acidic residues predominate over residues 103 to 115 (ARDETDRRERSEE).

Belongs to the bacterial ribosomal protein bS6 family.

Binds together with bS18 to 16S ribosomal RNA. This chain is Small ribosomal subunit protein bS6, found in Acidithiobacillus ferrooxidans (strain ATCC 23270 / DSM 14882 / CIP 104768 / NCIMB 8455) (Ferrobacillus ferrooxidans (strain ATCC 23270)).